The following is a 65-amino-acid chain: U15-hexatoxin-Mg1b (65 aa).

Contains 4 disulfide bonds. In terms of tissue distribution, expressed by the venom gland.

The protein resides in the secreted. In terms of biological role, in vivo, intrathorax injection into crickets causes death. The sequence is that of U15-hexatoxin-Mg1b from Macrothele gigas (Japanese funnel web spider).